A 137-amino-acid polypeptide reads, in one-letter code: uncharacterized protein (137 aa).

Positions 31–83 are disordered; it reads PASPINDKEKDKAGGRLPSGSEPRARAFCEAGADGEQGDPSPADTIKANQGHI.

This is an uncharacterized protein from Homo sapiens (Human).